An 860-amino-acid polypeptide reads, in one-letter code: Leucine--tRNA ligase (860 aa).

The 'HIGH' region signature appears at 42–52 (PYPSGRLHMGH). The short motif at 619–623 (KMSKS) is the 'KMSKS' region element. Lys622 is a binding site for ATP.

This sequence belongs to the class-I aminoacyl-tRNA synthetase family.

It is found in the cytoplasm. It catalyses the reaction tRNA(Leu) + L-leucine + ATP = L-leucyl-tRNA(Leu) + AMP + diphosphate. The polypeptide is Leucine--tRNA ligase (Salmonella typhi).